Here is a 289-residue protein sequence, read N- to C-terminus: 4-hydroxy-tetrahydrodipicolinate synthase (289 aa).

Thr43 is a pyruvate binding site. Catalysis depends on Tyr131, which acts as the Proton donor/acceptor. The active-site Schiff-base intermediate with substrate is the Lys160. Val200 lines the pyruvate pocket.

This sequence belongs to the DapA family. As to quaternary structure, homotetramer; dimer of dimers.

It is found in the cytoplasm. It catalyses the reaction L-aspartate 4-semialdehyde + pyruvate = (2S,4S)-4-hydroxy-2,3,4,5-tetrahydrodipicolinate + H2O + H(+). The protein operates within amino-acid biosynthesis; L-lysine biosynthesis via DAP pathway; (S)-tetrahydrodipicolinate from L-aspartate: step 3/4. Functionally, catalyzes the condensation of (S)-aspartate-beta-semialdehyde [(S)-ASA] and pyruvate to 4-hydroxy-tetrahydrodipicolinate (HTPA). The sequence is that of 4-hydroxy-tetrahydrodipicolinate synthase from Methanococcus maripaludis (strain C7 / ATCC BAA-1331).